A 329-amino-acid polypeptide reads, in one-letter code: DNA-directed RNA polymerase subunit alpha (329 aa).

Residues 1 to 235 form an alpha N-terminal domain (alpha-NTD) region; it reads MQGSVTEFLK…EQLDAFVDLR (235 aa). Positions 249-329 are alpha C-terminal domain (alpha-CTD); it reads FDPILLRPVD…NWPPASIAED (81 aa).

The protein belongs to the RNA polymerase alpha chain family. Homodimer. The RNAP catalytic core consists of 2 alpha, 1 beta, 1 beta' and 1 omega subunit. When a sigma factor is associated with the core the holoenzyme is formed, which can initiate transcription.

The catalysed reaction is RNA(n) + a ribonucleoside 5'-triphosphate = RNA(n+1) + diphosphate. Functionally, DNA-dependent RNA polymerase catalyzes the transcription of DNA into RNA using the four ribonucleoside triphosphates as substrates. In Histophilus somni (strain 129Pt) (Haemophilus somnus), this protein is DNA-directed RNA polymerase subunit alpha.